Consider the following 82-residue polypeptide: Chaplin-E (82 aa).

Residues 1 to 27 form the signal peptide; sequence MKNLKKAAAVTMVAGGLIAAGAGMASA. The region spanning 41–81 is the Chaplin domain; it reads SPGVASGNLVQAPIHIPVNAVGNSVNVIGVLNPAFGNLGVN.

This sequence belongs to the chaplin family. Short chaplin subfamily.

It is found in the cell surface. Its subcellular location is the secreted. The protein resides in the cell wall. The protein localises to the fimbrium. Functionally, one of 8 partially redundant surface-active proteins required for efficient formation of aerial mycelium; the short chaplins assemble into a hydrophobic, amyloidal fibrillar surface layer that envelopes and protects aerial hyphae and spores, presumably anchored to the long chaplins. Chaplins have an overlapping function with the surface-active SapB peptide; chaplins are essential on minimal medium while on rich medium both chaplins and SapB are required for efficient aerial hyphae formation. Chaplins are also involved in cell attachment to a hydrophobic surface. Forms amyloid fibrils in vitro probably composed of stacked beta-sheets, at low extracellular concentrations individually restores the ability to form aerial hyphae to a chaplin-deficient strain, but does so less well than other short chaplins. A small chaplin extract (ChpD, ChpE, ChpF, ChpG and ChpH) self-assembles into 2 different amyloids; small fibrils at the air-water interface form an amphipathic membrane that resembles spore-surface structures involved in aerial hyphae formation, and hydrophilic fibrils in solution that resemble the fibers that attach cells to a hydrophobic surface. At the air-water interface the hydrophilic surface is in contact with water (probably equivalent to the peptidoglycan layer), while the hydrophobic face is exposed to the air, making the surface of the aerial hyphae hydrophobic. A minimal chaplin strain capable of forming aerial mycelium/hyphae on minimal medium contains ChpC, ChpE and ChpH. The strain also has restored rodlet formation on the hyphae surface. A second strain with ChpA, ChpD and ChpE makes slightly less robust hyphae. This essential chaplin may coordinate the assembly and/or polymerization of the other chaplins. A small chaplin extract applied to a chaplin-deficient strain restores aerial hyphae formation. The small chaplin extract forms an amyloid-like structure similar to that seen on the surface of cells without rodlets (rdlA-rdlB deletions), and is highly surface active, reducing surface tension from 72 to 26 mJ/m(2), which probably allows escape of hyphae from an aqueous environment into air. This chain is Chaplin-E, found in Streptomyces coelicolor (strain ATCC BAA-471 / A3(2) / M145).